The chain runs to 182 residues: ATP-dependent protease subunit HslV (182 aa).

Residue T12 is part of the active site. Positions 167, 170, and 173 each coordinate Na(+).

This sequence belongs to the peptidase T1B family. HslV subfamily. In terms of assembly, a double ring-shaped homohexamer of HslV is capped on each side by a ring-shaped HslU homohexamer. The assembly of the HslU/HslV complex is dependent on binding of ATP.

It is found in the cytoplasm. The enzyme catalyses ATP-dependent cleavage of peptide bonds with broad specificity.. Allosterically activated by HslU binding. Functionally, protease subunit of a proteasome-like degradation complex believed to be a general protein degrading machinery. The chain is ATP-dependent protease subunit HslV from Prosthecochloris aestuarii (strain DSM 271 / SK 413).